An 856-amino-acid polypeptide reads, in one-letter code: Phospholipase D gamma 2 (856 aa).

One can recognise a C2 domain in the interval 21–161 (PLATSSGSLM…CSGNRIEGLF (141 aa)). Aspartate 223 serves as a coordination point for Ca(2+). The region spanning 362–397 (TIYTHHQKTMIVDAEAAQNRRKIVAFVGGLDLCNGR) is the PLD phosphodiesterase 1 domain. Residues histidine 367, lysine 369, and aspartate 374 contribute to the active site. Histidine 367 contacts a 1,2-diacyl-sn-glycero-3-phosphate. Residues histidine 403 and histidine 435 each coordinate Ca(2+). A 1,2-diacyl-sn-glycero-3-phosphate is bound by residues glutamine 562 and histidine 707. Residues 702-729 (FMIYVHSKGMVVDDEFVLIGSANINQRS) enclose the PLD phosphodiesterase 2 domain. Residues histidine 707, lysine 709, and aspartate 714 contribute to the active site. Glutamate 770 serves as a coordination point for Ca(2+).

It belongs to the phospholipase D family. C2-PLD subfamily. Requires Ca(2+) as cofactor. In terms of tissue distribution, highly expressed in roots and flowers, moderately in stems, leaves and seedlings and low in siliques. Not detected in seeds.

The protein localises to the cytoplasm. It localises to the membrane. It catalyses the reaction a 1,2-diacyl-sn-glycero-3-phosphocholine + H2O = a 1,2-diacyl-sn-glycero-3-phosphate + choline + H(+). Inhibited by neomycin. Its function is as follows. Hydrolyzes glycerol-phospholipids at the terminal phosphodiesteric bond to generate phosphatidic acids (PA). Plays an important role in various cellular processes, including phytohormone action, vesicular trafficking, secretion, cytoskeletal arrangement, meiosis, tumor promotion, pathogenesis, membrane deterioration and senescence. Can use phosphatidylserine but prefers ethanolamine-containing lipids as substrates. Can use phosphatidylcholine (PC) as substrates in the presence of phosphatidylethanolamine (PE) and PIP2. Involved in membrane lipid modulation under aluminum (Al) stress and negatively modulate plant tolerance to Al. This is Phospholipase D gamma 2 from Arabidopsis thaliana (Mouse-ear cress).